The following is a 986-amino-acid chain: Mediator of RNA polymerase II transcription subunit 24 (986 aa).

6 short sequence motifs (LXXLL motif) span residues 128 to 132 (LNWLL), 341 to 345 (LTPLL), 445 to 449 (LDLLL), 554 to 558 (LVALL), 785 to 789 (LPNLL), and 855 to 859 (LMRLL).

It belongs to the Mediator complex subunit 24 family. Component of the Mediator complex.

The protein localises to the nucleus. Its function is as follows. Component of the Mediator complex, a coactivator involved in the regulated transcription of nearly all RNA polymerase II-dependent genes. Mediator functions as a bridge to convey information from gene-specific regulatory proteins to the basal RNA polymerase II transcription machinery. Mediator is recruited to promoters by direct interactions with regulatory proteins and serves as a scaffold for the assembly of a functional preinitiation complex with RNA polymerase II and the general transcription factors. This chain is Mediator of RNA polymerase II transcription subunit 24 (MED24), found in Gallus gallus (Chicken).